The chain runs to 84 residues: RNA-binding protein Hfq (84 aa).

A Sm domain is found at 9 to 68 (DPYLNTLRKERVPVSIYLVNGIKLQGQIESFDQFVILLKNTVSQMVYKHAISTVVPSRPV).

Belongs to the Hfq family. Homohexamer.

Its function is as follows. RNA chaperone that binds small regulatory RNA (sRNAs) and mRNAs to facilitate mRNA translational regulation in response to envelope stress, environmental stress and changes in metabolite concentrations. Also binds with high specificity to tRNAs. In Azotobacter vinelandii (strain DJ / ATCC BAA-1303), this protein is RNA-binding protein Hfq.